The sequence spans 201 residues: Dynactin subunit 6 (201 aa).

It belongs to the dynactin subunits 5/6 family. Dynactin subunit 6 subfamily. Member of the pointed-end complex of the dynactin shoulder complex which contains dctn4, dctn5 and dctn6 subunits and Actr10. Within the complex dctn6 forms a heterodimer with dctn5. Interacts with plk1.

The protein localises to the cytoplasm. Its subcellular location is the cytoskeleton. The protein resides in the chromosome. It localises to the centromere. It is found in the kinetochore. Functionally, part of the dynactin complex that activates the molecular motor dynein for ultra-processive transport along microtubules. In Xenopus tropicalis (Western clawed frog), this protein is Dynactin subunit 6 (dctn6).